A 505-amino-acid polypeptide reads, in one-letter code: Acetyl-coenzyme A carboxylase carboxyl transferase subunit beta, chloroplastic (505 aa).

Positions 189–205 (ESVSNSKSGSSSIRTGG) are enriched in low complexity. Residues 189-213 (ESVSNSKSGSSSIRTGGNSSDFNRR) form a disordered region. The region spanning 228 to 499 (LWVQCENCYG…NQNSSRALGS (272 aa)) is the CoA carboxyltransferase N-terminal domain. Zn(2+) contacts are provided by cysteine 232, cysteine 235, cysteine 251, and cysteine 254. The C4-type zinc-finger motif lies at 232–254 (CENCYGLNYKKFVSFKMHICEQC).

The protein belongs to the AccD/PCCB family. In terms of assembly, acetyl-CoA carboxylase is a heterohexamer composed of biotin carboxyl carrier protein, biotin carboxylase and 2 subunits each of ACCase subunit alpha and ACCase plastid-coded subunit beta (accD). Requires Zn(2+) as cofactor.

The protein resides in the plastid. It is found in the chloroplast stroma. The enzyme catalyses N(6)-carboxybiotinyl-L-lysyl-[protein] + acetyl-CoA = N(6)-biotinyl-L-lysyl-[protein] + malonyl-CoA. The protein operates within lipid metabolism; malonyl-CoA biosynthesis; malonyl-CoA from acetyl-CoA: step 1/1. Component of the acetyl coenzyme A carboxylase (ACC) complex. Biotin carboxylase (BC) catalyzes the carboxylation of biotin on its carrier protein (BCCP) and then the CO(2) group is transferred by the transcarboxylase to acetyl-CoA to form malonyl-CoA. This chain is Acetyl-coenzyme A carboxylase carboxyl transferase subunit beta, chloroplastic, found in Calycanthus floridus var. glaucus (Eastern sweetshrub).